A 194-amino-acid chain; its full sequence is MSPQGPGTAVDVDDEVVLLDPDRRPCGTAPRLAVHGLDTPLHLAFSSYLFDAAGRLLVTRRALGKRTWPGVWTNSCCGHPRPGEDIALAVERRVDQELRLALTDLHCALPDFAYRATAADGLVENEVCPVYVARAVGDPDPDPAEVVEWRWVDWESYRQAALAAPWALSPWSVDQMTAFGQAAHPLTAALRAVG.

H35 and H42 together coordinate Mn(2+). The region spanning 40 to 174 is the Nudix hydrolase domain; it reads PLHLAFSSYL…PWALSPWSVD (135 aa). C77 is a catalytic residue. H79 provides a ligand contact to Mn(2+). A Mg(2+)-binding site is contributed by E97. Mn(2+)-binding residues include E124 and E126. E126 is a catalytic residue.

This sequence belongs to the IPP isomerase type 1 family. Mg(2+) is required as a cofactor. Requires Mn(2+) as cofactor.

The protein localises to the cytoplasm. It carries out the reaction isopentenyl diphosphate = dimethylallyl diphosphate. It participates in isoprenoid biosynthesis; dimethylallyl diphosphate biosynthesis; dimethylallyl diphosphate from isopentenyl diphosphate: step 1/1. Its function is as follows. Catalyzes the 1,3-allylic rearrangement of the homoallylic substrate isopentenyl (IPP) to its highly electrophilic allylic isomer, dimethylallyl diphosphate (DMAPP). This chain is Isopentenyl-diphosphate Delta-isomerase, found in Frankia alni (strain DSM 45986 / CECT 9034 / ACN14a).